The primary structure comprises 144 residues: Large ribosomal subunit protein uL15 (144 aa).

Residues 1 to 52 (MRLNSLSPAEGAKHSAKRLGRGIGSGLGKTGGRGHKGQKSRTGGGVRRGFEG) are disordered. The segment covering 21–31 (RGIGSGLGKTG) has biased composition (gly residues).

The protein belongs to the universal ribosomal protein uL15 family. In terms of assembly, part of the 50S ribosomal subunit.

In terms of biological role, binds to the 23S rRNA. This is Large ribosomal subunit protein uL15 from Actinobacillus pleuropneumoniae serotype 5b (strain L20).